Here is a 370-residue protein sequence, read N- to C-terminus: DnaJ homolog subfamily B member 12 (370 aa).

Methionine 1 is modified (N-acetylmethionine). Residues 51–92 (NQKPQPAGDQPQPTEATHTTHRKAAGANTASANGEAGGESTK) are disordered. The region spanning 110–174 (DYYEILGVSR…EKRKQYDQFG (65 aa)) is the J domain. Histidine 185 carries the post-translational modification Pros-methylhistidine. A helical membrane pass occupies residues 242 to 262 (GGLGVFVQLMPILILILVSAL).

This sequence belongs to the DnaJ family. DNAJB12/DNAJB14 subfamily. As to quaternary structure, homodimer and homotetramer. Interacts (via J domain) with HSPA8/Hsc70. Forms a multiprotein complex, at least composed of DNAJB12, DNAJB14, HSPA8/Hsc70 and SGTA; interaction with DNAJB14 and HSPA8/Hsc70 is direct. In terms of processing, methylated at His-185 by METTL9.

The protein resides in the endoplasmic reticulum membrane. The protein localises to the nucleus membrane. Acts as a co-chaperone with HSPA8/Hsc70; required to promote protein folding and trafficking, prevent aggregation of client proteins, and promote unfolded proteins to endoplasmic reticulum-associated degradation (ERAD) pathway. Acts by determining HSPA8/Hsc70's ATPase and polypeptide-binding activities. Can also act independently of HSPA8/Hsc70: together with DNAJB14, acts as a chaperone that promotes maturation of potassium channels KCND2 and KCNH2 by stabilizing nascent channel subunits and assembling them into tetramers. While stabilization of nascent channel proteins is dependent on HSPA8/Hsc70, the process of oligomerization of channel subunits is independent of HSPA8/Hsc70. When overexpressed, forms membranous structures together with DNAJB14 and HSPA8/Hsc70 within the nucleus; the role of these structures, named DJANGOs, is still unclear. The protein is DnaJ homolog subfamily B member 12 (DNAJB12) of Bos taurus (Bovine).